The primary structure comprises 201 residues: Flavin prenyltransferase UbiX (201 aa).

Residues 23–25 (GAS), Ser-49, 103–106 (SIKT), and Arg-138 contribute to the FMN site. Dimethylallyl phosphate-binding residues include Tyr-168 and Lys-184.

This sequence belongs to the UbiX/PAD1 family.

It catalyses the reaction dimethylallyl phosphate + FMNH2 = prenylated FMNH2 + phosphate. Flavin prenyltransferase that catalyzes the synthesis of the prenylated FMN cofactor (prenyl-FMN) for 4-hydroxy-3-polyprenylbenzoic acid decarboxylase UbiD. The prenyltransferase is metal-independent and links a dimethylallyl moiety from dimethylallyl monophosphate (DMAP) to the flavin N5 and C6 atoms of FMN. This Saccharolobus solfataricus (strain ATCC 35092 / DSM 1617 / JCM 11322 / P2) (Sulfolobus solfataricus) protein is Flavin prenyltransferase UbiX.